A 246-amino-acid chain; its full sequence is UPF0309 protein OB3413 (246 aa).

Positions 33–212 constitute an SIS domain; that stretch reads MATAVMNGNS…VLKMIEIFEE (180 aa).

This sequence belongs to the UPF0309 family.

This chain is UPF0309 protein OB3413, found in Oceanobacillus iheyensis (strain DSM 14371 / CIP 107618 / JCM 11309 / KCTC 3954 / HTE831).